A 489-amino-acid chain; its full sequence is Betaine aldehyde dehydrogenase (489 aa).

K(+)-binding residues include Thr26 and Asp93. 150–152 (GAW) contacts NAD(+). Lys162 functions as the Charge relay system in the catalytic mechanism. Residue 176 to 179 (KPSE) coordinates NAD(+). Val180 serves as a coordination point for K(+). An NAD(+)-binding site is contributed by 229–232 (GVET). Leu245 contacts K(+). Glu251 functions as the Proton acceptor in the catalytic mechanism. NAD(+) contacts are provided by Gly253, Cys285, and Glu386. The active-site Nucleophile is Cys285. Cys285 carries the post-translational modification Cysteine sulfenic acid (-SOH). K(+)-binding residues include Lys456 and Gly459. Catalysis depends on Glu463, which acts as the Charge relay system.

This sequence belongs to the aldehyde dehydrogenase family. In terms of assembly, dimer of dimers. Requires K(+) as cofactor.

The catalysed reaction is betaine aldehyde + NAD(+) + H2O = glycine betaine + NADH + 2 H(+). The protein operates within amine and polyamine biosynthesis; betaine biosynthesis via choline pathway; betaine from betaine aldehyde: step 1/1. Involved in the biosynthesis of the osmoprotectant glycine betaine. Catalyzes the irreversible oxidation of betaine aldehyde to the corresponding acid. The protein is Betaine aldehyde dehydrogenase of Burkholderia orbicola (strain AU 1054).